The chain runs to 490 residues: Cytochrome P450 2C2 (490 aa).

A heme-binding site is contributed by C435.

This sequence belongs to the cytochrome P450 family. The cofactor is heme.

It is found in the endoplasmic reticulum membrane. The protein resides in the microsome membrane. It carries out the reaction an organic molecule + reduced [NADPH--hemoprotein reductase] + O2 = an alcohol + oxidized [NADPH--hemoprotein reductase] + H2O + H(+). Its function is as follows. Cytochromes P450 are a group of heme-thiolate monooxygenases. In liver microsomes, this enzyme is involved in an NADPH-dependent electron transport pathway. It oxidizes a variety of structurally unrelated compounds, including steroids, fatty acids, and xenobiotics. In the epoxidation of arachidonic acid it generates only 14,15- and 11,12-cis-epoxyeicosatrienoic acids. This is Cytochrome P450 2C2 (CYP2C2) from Oryctolagus cuniculus (Rabbit).